The sequence spans 301 residues: Thyroxine 5-deiodinase (301 aa).

Over 1 to 41 (MSRQAAPRWVVGEGRGTLGGAATMLRSLLLHSLRLCSQTAS) the chain is Cytoplasmic. The helical; Signal-anchor for type II membrane protein transmembrane segment at 42–64 (CLVLFPRFLGTAFMLWLLDFLCI) threads the bilayer. Residues 65 to 301 (RKHLLGRRRR…QLHGPQPRRV (237 aa)) lie on the Extracellular side of the membrane. Selenocysteine 167 is an active-site residue. A non-standard amino acid (selenocysteine) is located at residue selenocysteine 167.

The protein belongs to the iodothyronine deiodinase family. Monomer. Homodimer. May undergo minor heretodimerization with DIO1 and DIO2. Highly expressed in mammary gland. Detected at lower levels in kidney, and at very low levels in the other tissues.

Its subcellular location is the cell membrane. It localises to the endosome membrane. The enzyme catalyses 3,3',5'-triiodo-L-thyronine + iodide + A + H(+) = L-thyroxine + AH2. It catalyses the reaction 3,3'-diiodo-L-thyronine + iodide + A + H(+) = 3,3',5-triiodo-L-thyronine + AH2. It carries out the reaction 3-iodo-L-thyronine + iodide + A + H(+) = 3,5-diiodo-L-thyronine + AH2. The catalysed reaction is L-thyronine + iodide + A + H(+) = 3-iodo-L-thyronine + AH2. The enzyme catalyses 3',5'-diiodo-L-thyronine + iodide + A + H(+) = 3,3',5'-triiodo-L-thyronine + AH2. It catalyses the reaction 3'-iodo-L-thyronine + iodide + A + H(+) = 3,3'-diiodo-L-thyronine + AH2. It carries out the reaction 3,3',5'-triiodothyronamine + iodide + A + H(+) = 3,3',5,5'-tetraiodothyronamine + AH2. The catalysed reaction is 3',5'-diiodothyronamine + iodide + A + H(+) = 3,3',5'-triiodothyronamine + AH2. The enzyme catalyses 3,3'-diiodothyronamine + iodide + A + H(+) = 3,3',5-triiodothyronamine + AH2. It catalyses the reaction 3-iodothyronamine + iodide + A + H(+) = 3,5-diiodothyronamine + AH2. It carries out the reaction 3'-iodothyronamine + iodide + A + H(+) = 3,3'-diiodothyronamine + AH2. The catalysed reaction is thyronamine + iodide + A + H(+) = 3-iodothyronamine + AH2. Functionally, plays a crucial role in the metabolism of thyroid hormones (TH) and has specific roles in TH activation and inactivation by deiodination. Catalyzes the deiodination of L-thyroxine (T4) to 3,3',5'-triiodothyronine (rT3), 3,5,3'-triiodothyronine (T3) to 3,3'-diiodothyronine (3,3'-T2), 3,5-diiodothyronine (3,5-T2) to 3-monoiodothyronine (3-T1), rT3 to 3',5'-diiodothyronine (3',5'-T2) and 3,3'-T2 to 3'-monoiodothyronine (3'-T1) via inner-ring deiodination (IRD). Catalyzes the deiodination of 3-T1 to L-thyronine (T0) via outer-ring deiodination (ORD). Catalyzes the tyrosyl ring deiodinations of 3,3',5,5'-tetraiodothyronamine, 3,3',5'-triiodothyronamine, 3,5,3'-triiodothyronamine, 3,5-diiodothyronamine, 3,3'-diiodothyronamine and 3-iodothyronamine. This Bos taurus (Bovine) protein is Thyroxine 5-deiodinase (DIO3).